The primary structure comprises 319 residues: NADH-ubiquinone oxidoreductase chain 1 (319 aa).

8 helical membrane-spanning segments follow: residues leucine 3–phenylalanine 23, leucine 74–proline 94, isoleucine 106–alanine 126, threonine 149–phenylalanine 169, alanine 175–alanine 195, leucine 226–phenylalanine 246, leucine 254–valine 274, and phenylalanine 294–glycine 314.

The protein belongs to the complex I subunit 1 family.

It is found in the mitochondrion inner membrane. The enzyme catalyses a ubiquinone + NADH + 5 H(+)(in) = a ubiquinol + NAD(+) + 4 H(+)(out). Its function is as follows. Core subunit of the mitochondrial membrane respiratory chain NADH dehydrogenase (Complex I) that is believed to belong to the minimal assembly required for catalysis. Complex I functions in the transfer of electrons from NADH to the respiratory chain. The immediate electron acceptor for the enzyme is believed to be ubiquinone. This Polypterus ornatipinnis (Ornate bichir) protein is NADH-ubiquinone oxidoreductase chain 1 (MT-ND1).